A 296-amino-acid polypeptide reads, in one-letter code: 4-diphosphocytidyl-2-C-methyl-D-erythritol kinase (296 aa).

Residue lysine 18 is part of the active site. 102–112 (PMGGGIGGGSS) contributes to the ATP binding site. Aspartate 144 is a catalytic residue.

Belongs to the GHMP kinase family. IspE subfamily.

It catalyses the reaction 4-CDP-2-C-methyl-D-erythritol + ATP = 4-CDP-2-C-methyl-D-erythritol 2-phosphate + ADP + H(+). The protein operates within isoprenoid biosynthesis; isopentenyl diphosphate biosynthesis via DXP pathway; isopentenyl diphosphate from 1-deoxy-D-xylulose 5-phosphate: step 3/6. Catalyzes the phosphorylation of the position 2 hydroxy group of 4-diphosphocytidyl-2C-methyl-D-erythritol. The sequence is that of 4-diphosphocytidyl-2-C-methyl-D-erythritol kinase from Vibrio atlanticus (strain LGP32) (Vibrio splendidus (strain Mel32)).